The following is a 78-amino-acid chain: Probable [Fe-S]-dependent transcriptional repressor (78 aa).

Iron-sulfur cluster is bound by residues cysteine 56, cysteine 61, cysteine 64, and cysteine 70.

It belongs to the FeoC family.

Functionally, may function as a transcriptional regulator that controls feoABC expression. The protein is Probable [Fe-S]-dependent transcriptional repressor of Citrobacter koseri (strain ATCC BAA-895 / CDC 4225-83 / SGSC4696).